A 404-amino-acid polypeptide reads, in one-letter code: Probable tRNA sulfurtransferase (404 aa).

A THUMP domain is found at 60-165; sequence QPIVEALKLV…DEAAYISYEE (106 aa). ATP is bound by residues 183–184, 208–209, arginine 265, glycine 287, and glutamine 296; these read ML and HF.

Belongs to the ThiI family.

It is found in the cytoplasm. The enzyme catalyses [ThiI sulfur-carrier protein]-S-sulfanyl-L-cysteine + a uridine in tRNA + 2 reduced [2Fe-2S]-[ferredoxin] + ATP + H(+) = [ThiI sulfur-carrier protein]-L-cysteine + a 4-thiouridine in tRNA + 2 oxidized [2Fe-2S]-[ferredoxin] + AMP + diphosphate. It catalyses the reaction [ThiS sulfur-carrier protein]-C-terminal Gly-Gly-AMP + S-sulfanyl-L-cysteinyl-[cysteine desulfurase] + AH2 = [ThiS sulfur-carrier protein]-C-terminal-Gly-aminoethanethioate + L-cysteinyl-[cysteine desulfurase] + A + AMP + 2 H(+). It functions in the pathway cofactor biosynthesis; thiamine diphosphate biosynthesis. Its function is as follows. Catalyzes the ATP-dependent transfer of a sulfur to tRNA to produce 4-thiouridine in position 8 of tRNAs, which functions as a near-UV photosensor. Also catalyzes the transfer of sulfur to the sulfur carrier protein ThiS, forming ThiS-thiocarboxylate. This is a step in the synthesis of thiazole, in the thiamine biosynthesis pathway. The sulfur is donated as persulfide by IscS. The sequence is that of Probable tRNA sulfurtransferase from Streptococcus pyogenes serotype M1.